The following is a 271-amino-acid chain: Phosphatidylglycerol--prolipoprotein diacylglyceryl transferase (271 aa).

Transmembrane regions (helical) follow at residues 17 to 37 (LAIH…FFLA), 63 to 83 (ILFL…CLFY), and 95 to 115 (IFAV…VLVS). Arg-146 lines the a 1,2-diacyl-sn-glycero-3-phospho-(1'-sn-glycerol) pocket. The next 3 membrane-spanning stretches (helical) occupy residues 182-202 (SQVY…WLYA), 209-229 (GQVS…AEFF), and 243-263 (MSMG…LWIW).

This sequence belongs to the Lgt family.

It is found in the cell inner membrane. The catalysed reaction is L-cysteinyl-[prolipoprotein] + a 1,2-diacyl-sn-glycero-3-phospho-(1'-sn-glycerol) = an S-1,2-diacyl-sn-glyceryl-L-cysteinyl-[prolipoprotein] + sn-glycerol 1-phosphate + H(+). Its pathway is protein modification; lipoprotein biosynthesis (diacylglyceryl transfer). Its function is as follows. Catalyzes the transfer of the diacylglyceryl group from phosphatidylglycerol to the sulfhydryl group of the N-terminal cysteine of a prolipoprotein, the first step in the formation of mature lipoproteins. This is Phosphatidylglycerol--prolipoprotein diacylglyceryl transferase from Polaromonas naphthalenivorans (strain CJ2).